We begin with the raw amino-acid sequence, 450 residues long: Glutathione reductase (450 aa).

Residues S14, G15, E34, T41, C42, K50, and A115 each coordinate FAD. S14 is a binding site for glutathione. C42 and C47 are disulfide-bonded. 6 residues coordinate NADP(+): A175, I178, E181, R198, R204, and G262. D303 contributes to the FAD binding site. NADP(+) is bound at residue D309. FAD is bound at residue T311. R319 is a glutathione binding site. V342 is an NADP(+) binding site. H439 contributes to the FAD binding site. H439 serves as the catalytic Proton acceptor.

The protein belongs to the class-I pyridine nucleotide-disulfide oxidoreductase family. As to quaternary structure, homodimer. FAD is required as a cofactor.

Its subcellular location is the cytoplasm. It catalyses the reaction 2 glutathione + NADP(+) = glutathione disulfide + NADPH + H(+). In terms of biological role, catalyzes the reduction of glutathione disulfide (GSSG) to reduced glutathione (GSH). Constitutes the major mechanism to maintain a high GSH:GSSG ratio in the cytosol. In Streptococcus thermophilus, this protein is Glutathione reductase (gor).